Here is a 138-residue protein sequence, read N- to C-terminus: 1,4-dihydroxy-2-naphthoyl-CoA hydrolase (138 aa).

D14 is a catalytic residue.

It belongs to the 4-hydroxybenzoyl-CoA thioesterase family. DHNA-CoA hydrolase subfamily.

It carries out the reaction 1,4-dihydroxy-2-naphthoyl-CoA + H2O = 1,4-dihydroxy-2-naphthoate + CoA + H(+). Its pathway is cofactor biosynthesis; phylloquinone biosynthesis. It functions in the pathway quinol/quinone metabolism; 1,4-dihydroxy-2-naphthoate biosynthesis; 1,4-dihydroxy-2-naphthoate from chorismate: step 7/7. In terms of biological role, catalyzes the hydrolysis of 1,4-dihydroxy-2-naphthoyl-CoA (DHNA-CoA) to 1,4-dihydroxy-2-naphthoate (DHNA), a reaction involved in phylloquinone (vitamin K1) biosynthesis. The protein is 1,4-dihydroxy-2-naphthoyl-CoA hydrolase of Rippkaea orientalis (strain PCC 8801 / RF-1) (Cyanothece sp. (strain PCC 8801)).